Here is a 101-residue protein sequence, read N- to C-terminus: Small ribosomal subunit protein uS10 (101 aa).

Belongs to the universal ribosomal protein uS10 family. As to quaternary structure, part of the 30S ribosomal subunit.

Functionally, involved in the binding of tRNA to the ribosomes. This is Small ribosomal subunit protein uS10 from Mycobacterium bovis (strain ATCC BAA-935 / AF2122/97).